The following is a 130-amino-acid chain: Small ribosomal subunit protein uS9 (130 aa).

This sequence belongs to the universal ribosomal protein uS9 family.

This Desulfovibrio desulfuricans (strain ATCC 27774 / DSM 6949 / MB) protein is Small ribosomal subunit protein uS9.